Here is a 418-residue protein sequence, read N- to C-terminus: Tektin-1 (418 aa).

Coiled coils occupy residues Lys21–Leu84, Leu268–Gly308, and Arg336–Ile383. The disordered stretch occupies residues Pro399–Cys418.

The protein belongs to the tektin family. In terms of assembly, microtubule inner protein component of sperm flagellar doublet microtubules. Ubiquitinated, leading to its degradation. Deubiquitinated by USP16, promoting its stability. As to expression, expressed in trachea multiciliated cells.

The protein resides in the cytoplasm. It localises to the cytoskeleton. The protein localises to the cilium axoneme. It is found in the flagellum axoneme. In terms of biological role, microtubule inner protein (MIP) part of the dynein-decorated doublet microtubules (DMTs) in cilia and flagellar axoneme. Forms filamentous polymers in the walls of ciliary and flagellar microtubules. The polypeptide is Tektin-1 (TEKT1) (Bos taurus (Bovine)).